Reading from the N-terminus, the 283-residue chain is Pantothenate synthetase (283 aa).

30–37 (MGALHEGH) contacts ATP. Catalysis depends on His-37, which acts as the Proton donor. Gln-61 contacts (R)-pantoate. Gln-61 contacts beta-alanine. 147–150 (GEKD) is a binding site for ATP. Residue Gln-153 participates in (R)-pantoate binding. ATP is bound by residues Ile-176 and 184-187 (VSSR).

Belongs to the pantothenate synthetase family. As to quaternary structure, homodimer.

It localises to the cytoplasm. The catalysed reaction is (R)-pantoate + beta-alanine + ATP = (R)-pantothenate + AMP + diphosphate + H(+). The protein operates within cofactor biosynthesis; (R)-pantothenate biosynthesis; (R)-pantothenate from (R)-pantoate and beta-alanine: step 1/1. Its function is as follows. Catalyzes the condensation of pantoate with beta-alanine in an ATP-dependent reaction via a pantoyl-adenylate intermediate. This chain is Pantothenate synthetase, found in Chlorobium phaeobacteroides (strain DSM 266 / SMG 266 / 2430).